A 525-amino-acid chain; its full sequence is MSEYLQQIAKRRTFAIISHPDAGKTTITEKMLLFGNAIKTAGTVKAKKSGIHATSDWMEMEKQRGISITTSVMQFPYNGRIINLLDTPGHEDFSEDTYRTLTAVDSALMVVDAVKGVEDRTIKLMNVCRLRDTPIVTFMNKFDRDTRDPLELLDEVENILKIKCAPMNWPIGMGKYFKGVYDLYNDEVTLFETGHGHEIYPYKKIKGLANAKDAIGIDLYEDLEMEIDLVRGASHEFDEQEFLEGNLTPVYFGTALSNFGVKEMMDGFTRYAPAPQHREADQRVVAADEQKLTGFVFKIQANMDEKHRNRIAFFRICSGKYEKGMKIFHERTGKQMQISKALTFMAGEREQVEEGYAGDIIGLHNHGSIQIGDSFTQGEKLKFKGIPNFAPEIFKRVKLNDPLKMKALQKGLVQLSEEGATQVFKPFISNDLVLGAVGVLQFDVVAQRLASEYNVKCSYEGVNVTLARWIFCNDEKKLNDFKKKYEVNLAYDGAGYLTYLAPTGVNLQLAQEKNPDIIFSATREH.

Positions 9–276 (AKRRTFAIIS…GFTRYAPAPQ (268 aa)) constitute a tr-type G domain. GTP-binding positions include 18 to 25 (SHPDAGKT), 86 to 90 (DTPGH), and 140 to 143 (NKFD).

The protein belongs to the TRAFAC class translation factor GTPase superfamily. Classic translation factor GTPase family. PrfC subfamily.

The protein resides in the cytoplasm. In terms of biological role, increases the formation of ribosomal termination complexes and stimulates activities of RF-1 and RF-2. It binds guanine nucleotides and has strong preference for UGA stop codons. It may interact directly with the ribosome. The stimulation of RF-1 and RF-2 is significantly reduced by GTP and GDP, but not by GMP. This is Peptide chain release factor 3 from Francisella tularensis subsp. tularensis (strain WY96-3418).